A 179-amino-acid polypeptide reads, in one-letter code: ATP synthase subunit delta (179 aa).

The protein belongs to the ATPase delta chain family. In terms of assembly, F-type ATPases have 2 components, F(1) - the catalytic core - and F(0) - the membrane proton channel. F(1) has five subunits: alpha(3), beta(3), gamma(1), delta(1), epsilon(1). F(0) has three main subunits: a(1), b(2) and c(10-14). The alpha and beta chains form an alternating ring which encloses part of the gamma chain. F(1) is attached to F(0) by a central stalk formed by the gamma and epsilon chains, while a peripheral stalk is formed by the delta and b chains.

It localises to the cell inner membrane. Functionally, f(1)F(0) ATP synthase produces ATP from ADP in the presence of a proton or sodium gradient. F-type ATPases consist of two structural domains, F(1) containing the extramembraneous catalytic core and F(0) containing the membrane proton channel, linked together by a central stalk and a peripheral stalk. During catalysis, ATP synthesis in the catalytic domain of F(1) is coupled via a rotary mechanism of the central stalk subunits to proton translocation. Its function is as follows. This protein is part of the stalk that links CF(0) to CF(1). It either transmits conformational changes from CF(0) to CF(1) or is implicated in proton conduction. The polypeptide is ATP synthase subunit delta (Burkholderia pseudomallei (strain 1710b)).